Consider the following 132-residue polypeptide: Small ribosomal subunit protein uS11 (132 aa).

The protein belongs to the universal ribosomal protein uS11 family. Part of the 30S ribosomal subunit.

Functionally, located on the platform of the 30S subunit. This Thermoplasma volcanium (strain ATCC 51530 / DSM 4299 / JCM 9571 / NBRC 15438 / GSS1) protein is Small ribosomal subunit protein uS11.